We begin with the raw amino-acid sequence, 466 residues long: Asparagine--tRNA ligase (466 aa).

This sequence belongs to the class-II aminoacyl-tRNA synthetase family. Homodimer.

The protein localises to the cytoplasm. The catalysed reaction is tRNA(Asn) + L-asparagine + ATP = L-asparaginyl-tRNA(Asn) + AMP + diphosphate + H(+). This chain is Asparagine--tRNA ligase, found in Shewanella baltica (strain OS195).